Here is a 239-residue protein sequence, read N- to C-terminus: Putative CCR4-associated factor 1 homolog 8 (239 aa).

Residues D17, E19, D133, and N204 each coordinate a divalent metal cation.

Belongs to the CAF1 family. In terms of assembly, component of the CCR4-NOT complex, at least composed of CRR4 and CAF1 proteins. The cofactor is a divalent metal cation.

Its subcellular location is the nucleus. It localises to the cytoplasm. It carries out the reaction Exonucleolytic cleavage of poly(A) to 5'-AMP.. Ubiquitous transcription factor required for a diverse set of processes. It is a component of the CCR4 complex involved in the control of gene expression. In Arabidopsis thaliana (Mouse-ear cress), this protein is Putative CCR4-associated factor 1 homolog 8 (CAF1-8).